The primary structure comprises 216 residues: Co-chaperone protein SBA1 (216 aa).

Serine 2 is modified (N-acetylserine). Residues 5 to 108 (VINPQVAWAQ…LESEYWPRLT (104 aa)) enclose the CS domain. Repeats lie at residues 141–156 (AQGM…AGGA) and 160–174 (GGMD…AGGA). The interval 169 to 216 (GGAGGAGSPDMAQLQQLLAQSGGNLDMGDFKENDEEDEEEEIEPEVKA) is disordered. Positions 200–216 (ENDEEDEEEEIEPEVKA) are enriched in acidic residues.

The protein belongs to the p23/wos2 family. As to quaternary structure, interacts with HSP82.

Acts as a co-chaperone. In Saccharomyces cerevisiae (strain ATCC 204508 / S288c) (Baker's yeast), this protein is Co-chaperone protein SBA1 (SBA1).